A 143-amino-acid chain; its full sequence is Transcriptional regulator MraZ (143 aa).

2 SpoVT-AbrB domains span residues Glu-5–Glu-47 and Ala-76–Leu-119.

This sequence belongs to the MraZ family. As to quaternary structure, forms oligomers.

It is found in the cytoplasm. Its subcellular location is the nucleoid. The protein is Transcriptional regulator MraZ of Macrococcus caseolyticus (strain JCSC5402) (Macrococcoides caseolyticum).